Here is a 134-residue protein sequence, read N- to C-terminus: Small ribosomal subunit protein uS11 (134 aa).

It belongs to the universal ribosomal protein uS11 family. As to quaternary structure, part of the 30S ribosomal subunit. Interacts with proteins S7 and S18. Binds to IF-3.

Functionally, located on the platform of the 30S subunit, it bridges several disparate RNA helices of the 16S rRNA. Forms part of the Shine-Dalgarno cleft in the 70S ribosome. This is Small ribosomal subunit protein uS11 from Polaromonas naphthalenivorans (strain CJ2).